The chain runs to 116 residues: Endoribonuclease toxin ChpB (116 aa).

The protein belongs to the PemK/MazF family. In terms of assembly, homodimer, interacts with ChpS, which inhibits the endoribonuclease activity.

Its activity is regulated as follows. Stimulated in vitro in a concentration-dependent fashion by extracellular death factor (EDF, a quorum sensing pentapeptide sequence NNWNN, probably produced from the zwf gene product glucose-6-phosphate 1-dehydrogenase), which is able to overcome inhibition by cognate antitoxin ChpS. Its function is as follows. Toxic component of a type II toxin-antitoxin (TA) system. ChpB is a sequence-specific mRNA and (weak) tmRNA endoribonuclease that inhibits protein synthesis and induces bacterial stasis. Cleavage is independent of the ribosome. Cleavage occurs at ACY sequences where Y is not C. The endoribonuclease activity is not as strong as that of MazF. The endoribonuclease activity (a toxin) is inhibited by its labile cognate antitoxin ChpS. Toxicity results when the levels of ChpS decrease in the cell, leading to mRNA degradation. Both ChpS and ChpB probably bind to the promoter region of the chpS-chpB operon to autoregulate their synthesis. This Escherichia coli (strain K12) protein is Endoribonuclease toxin ChpB (chpB).